A 154-amino-acid chain; its full sequence is Oleosin 16.4 kDa (154 aa).

N-acetylalanine is present on Ala2. The tract at residues 2–33 (ADRDRSYRTFDQVVRGDRTNYQSGPSTTQVLT) is polar. Helical transmembrane passes span 31-51 (VLTVLTLLPIGGTLLALAGLT), 65-85 (LFVIFSPVLVPAAIAVFMAVA), and 86-106 (GFLSSGAFGLTGLSSLSYVFN). The segment at 34 to 105 (VLTLLPIGGT…TGLSSLSYVF (72 aa)) is hydrophobic.

Belongs to the oleosin family.

Its subcellular location is the lipid droplet. It is found in the membrane. In terms of biological role, may have a structural role to stabilize the lipid body during desiccation of the seed by preventing coalescence of the oil. Probably interacts with both lipid and phospholipid moieties of lipid bodies. May also provide recognition signals for specific lipase anchorage in lipolysis during seedling growth. This is Oleosin 16.4 kDa (MATP7) from Gossypium hirsutum (Upland cotton).